Reading from the N-terminus, the 59-residue chain is Large ribosomal subunit protein bL32 (59 aa).

The segment covering 1–16 (MAVPKRKTSPSKRGMR) has biased composition (basic residues). The disordered stretch occupies residues 1–41 (MAVPKRKTSPSKRGMRRSADALKAPTYIEDKNSGELRRPHH). The span at 28 to 41 (IEDKNSGELRRPHH) shows a compositional bias: basic and acidic residues.

It belongs to the bacterial ribosomal protein bL32 family.

This is Large ribosomal subunit protein bL32 from Bartonella henselae (strain ATCC 49882 / DSM 28221 / CCUG 30454 / Houston 1) (Rochalimaea henselae).